Reading from the N-terminus, the 187-residue chain is Elongation factor P (187 aa).

This sequence belongs to the elongation factor P family.

It localises to the cytoplasm. The protein operates within protein biosynthesis; polypeptide chain elongation. Functionally, involved in peptide bond synthesis. Stimulates efficient translation and peptide-bond synthesis on native or reconstituted 70S ribosomes in vitro. Probably functions indirectly by altering the affinity of the ribosome for aminoacyl-tRNA, thus increasing their reactivity as acceptors for peptidyl transferase. The polypeptide is Elongation factor P (Granulibacter bethesdensis (strain ATCC BAA-1260 / CGDNIH1)).